A 1159-amino-acid polypeptide reads, in one-letter code: WASH complex subunit 5 (1159 aa).

Ser917 carries the phosphoserine modification.

The protein belongs to the strumpellin family. Component of the WASH core complex also described as WASH regulatory complex (SHRC) composed of WASH (WASHC1, WASH2P or WASH3P), WASHC2 (WASHC2A or WASHC2C), WASHC3, WASHC4 and WASHC5. The WASH core complex associates via WASHC2 with the F-actin-capping protein dimer (formed by CAPZA1, CAPZA2 or CAPZA3 and CAPZB) in a transient or substoichiometric manner which was initially described as WASH complex. Interacts with VCP, PI4K2A.

The protein resides in the cytoplasm. It is found in the cytosol. Its subcellular location is the endoplasmic reticulum. The protein localises to the early endosome. Its function is as follows. Acts as a component of the WASH core complex that functions as a nucleation-promoting factor (NPF) at the surface of endosomes, where it recruits and activates the Arp2/3 complex to induce actin polymerization, playing a key role in the fission of tubules that serve as transport intermediates during endosome sorting. May be involved in axonal outgrowth. Involved in cellular localization of ADRB2. Involved in cellular trafficking of BLOC-1 complex cargos such as ATP7A and VAMP7. The sequence is that of WASH complex subunit 5 from Pongo abelii (Sumatran orangutan).